A 408-amino-acid chain; its full sequence is Multidrug resistance protein MdtG (408 aa).

The next 11 membrane-spanning stretches (helical) occupy residues Leu16–Phe36, Ile58–Ala78, Leu92–Ile112, Ala115–Val135, Thr146–Ala166, Pro173–Ile193, Leu224–Leu244, Val256–Pro276, Ile290–Thr310, Phe319–Asn339, and Ala378–Leu398.

Belongs to the major facilitator superfamily. DHA1 family. MdtG (TC 2.A.1.2.20) subfamily.

The protein localises to the cell inner membrane. Its function is as follows. Confers resistance to fosfomycin and deoxycholate. The sequence is that of Multidrug resistance protein MdtG from Escherichia coli (strain 55989 / EAEC).